A 244-amino-acid polypeptide reads, in one-letter code: 14-3-3 protein beta/alpha (244 aa).

At M1 the chain carries N-acetylmethionine. S184 is subject to Phosphoserine.

This sequence belongs to the 14-3-3 family. Homodimer, and heterodimer with other family members. In terms of processing, phosphorylated.

It is found in the cytoplasm. Functionally, adapter protein implicated in the regulation of a large spectrum of both general and specialized signaling pathways. Binds to a large number of partners, usually by recognition of a phosphoserine or phosphothreonine motif. Binding generally results in the modulation of the activity of the binding partner. The protein is 14-3-3 protein beta/alpha (YWHAB) of Gallus gallus (Chicken).